A 468-amino-acid polypeptide reads, in one-letter code: 3-isopropylmalate dehydratase large subunit (468 aa).

3 residues coordinate [4Fe-4S] cluster: cysteine 348, cysteine 409, and cysteine 412.

Belongs to the aconitase/IPM isomerase family. LeuC type 1 subfamily. Heterodimer of LeuC and LeuD. The cofactor is [4Fe-4S] cluster.

It carries out the reaction (2R,3S)-3-isopropylmalate = (2S)-2-isopropylmalate. The protein operates within amino-acid biosynthesis; L-leucine biosynthesis; L-leucine from 3-methyl-2-oxobutanoate: step 2/4. Functionally, catalyzes the isomerization between 2-isopropylmalate and 3-isopropylmalate, via the formation of 2-isopropylmaleate. This chain is 3-isopropylmalate dehydratase large subunit, found in Dechloromonas aromatica (strain RCB).